The chain runs to 166 residues: NAD(P)H-quinone oxidoreductase subunit I, chloroplastic (166 aa).

2 4Fe-4S ferredoxin-type domains span residues 55-84 and 95-124; these read GRIHFEFDKCIACEVCVRVCPIDLPVVDWK and LNYSIDFGICIFCGNCVEYCPTNCLSMTEE. C64, C67, C70, C74, C104, C107, C110, and C114 together coordinate [4Fe-4S] cluster.

It belongs to the complex I 23 kDa subunit family. NDH is composed of at least 16 different subunits, 5 of which are encoded in the nucleus. The cofactor is [4Fe-4S] cluster.

The protein localises to the plastid. Its subcellular location is the chloroplast thylakoid membrane. The catalysed reaction is a plastoquinone + NADH + (n+1) H(+)(in) = a plastoquinol + NAD(+) + n H(+)(out). The enzyme catalyses a plastoquinone + NADPH + (n+1) H(+)(in) = a plastoquinol + NADP(+) + n H(+)(out). Its function is as follows. NDH shuttles electrons from NAD(P)H:plastoquinone, via FMN and iron-sulfur (Fe-S) centers, to quinones in the photosynthetic chain and possibly in a chloroplast respiratory chain. The immediate electron acceptor for the enzyme in this species is believed to be plastoquinone. Couples the redox reaction to proton translocation, and thus conserves the redox energy in a proton gradient. This is NAD(P)H-quinone oxidoreductase subunit I, chloroplastic from Chaetymenia peduncularis (Daisy).